The chain runs to 338 residues: Cytochrome f (338 aa).

The first 45 residues, 1–45 (MNFKVCSFPSRRQSIAAFVRVLMVILLTLGALVSSDVLLPQPAAA), serve as a signal peptide directing secretion. Residues Tyr46, Cys66, Cys69, and His70 each contribute to the heme site. A helical transmembrane segment spans residues 300 to 316 (IAFLAAITLTQILLVLK).

This sequence belongs to the cytochrome f family. In terms of assembly, the 4 large subunits of the cytochrome b6-f complex are cytochrome b6, subunit IV (17 kDa polypeptide, PetD), cytochrome f and the Rieske protein, while the 4 small subunits are PetG, PetL, PetM and PetN. The complex functions as a dimer. Heme is required as a cofactor.

The protein resides in the cellular thylakoid membrane. Component of the cytochrome b6-f complex, which mediates electron transfer between photosystem II (PSII) and photosystem I (PSI), cyclic electron flow around PSI, and state transitions. In Leptolyngbya laminosa (Phormidium laminosum), this protein is Cytochrome f (petA).